Here is a 196-residue protein sequence, read N- to C-terminus: Phosphate-specific transport system accessory protein PhoU homolog (196 aa).

It belongs to the PhoU family. Homodimer.

Its subcellular location is the cytoplasm. Its function is as follows. Plays a role in the regulation of phosphate uptake. The chain is Phosphate-specific transport system accessory protein PhoU homolog from Archaeoglobus fulgidus (strain ATCC 49558 / DSM 4304 / JCM 9628 / NBRC 100126 / VC-16).